Here is a 99-residue protein sequence, read N- to C-terminus: DNA-binding protein Fis (99 aa).

Positions 75–94 (QTRAALMLGVNRGTLRKKLK) form a DNA-binding region, H-T-H motif.

It belongs to the transcriptional regulatory Fis family. Homodimer.

Its function is as follows. Activates ribosomal RNA transcription. Plays a direct role in upstream activation of rRNA promoters. The chain is DNA-binding protein Fis from Actinobacillus succinogenes (strain ATCC 55618 / DSM 22257 / CCUG 43843 / 130Z).